The chain runs to 271 residues: Regulatory protein RecX (271 aa).

The protein belongs to the RecX family.

It is found in the cytoplasm. In terms of biological role, modulates RecA activity. In Lactobacillus gasseri (strain ATCC 33323 / DSM 20243 / BCRC 14619 / CIP 102991 / JCM 1131 / KCTC 3163 / NCIMB 11718 / NCTC 13722 / AM63), this protein is Regulatory protein RecX.